Reading from the N-terminus, the 583-residue chain is MLKEELEGLNISVGIYQNTEEAFTVPLIPLGLKETKDIDFSVILKDFILEHYSEDGYLYEDEITDLMDPRQACRTPSRDEARVELLMTYFIQLGFAWIRFKKYNTSPRIFFYRYDSLNGVLVSQQNLLLEKASVLFNTGALYTQIGTWRYWQMQAGLQSAIDAFQRAAGVLNYLKETFTHTPSYDMSPAMLSVLVKMMLTQAQESVFEKISLPGIRNEFFMLVKVAQEAAKVGEVYQQLHAAMSQALVKENIPYSWASLACVKAHHYTALAHYFTAILLIDHQVKPGMDLDHQEKCLSQLYDHMPEGLTPLATLKNDQQRRQLGKSHLHRAMAHHEESVREASLCKKLRSIEVLQKVLCAAQERSRLTYAQHQEDDDLLNLIHAPSVVAKTEQEPKGPLSVFLANKQWMPPRSNRFTAEEGDLGFTLRGNAPVEVHFLDPYCSALVAGARGGDYIVSIQLVDCKWLTVSEVMKLLKSFGEDEIEMKVVSLLDSTSSMHNKSATYSVGMQKTYSMICLAIDDDNKTDKTQKISKKLSFLSWGTNKNRQKSASTLCLPSVGAARPQVKKKLPSPFSLLNSDSSSY.

Positions 26 to 375 (PLIPLGLKET…RLTYAQHQED (350 aa)) constitute a BRO1 domain. The PDZ domain occupies 412–490 (RSNRFTAEEG…DEIEMKVVSL (79 aa)).

This Homo sapiens (Human) protein is Putative rhophilin-2-like protein RHPN2P1 (RHPN2P1).